The following is a 208-amino-acid chain: Small ribosomal subunit protein uS4 (208 aa).

Residues 30 to 49 (KSALEKRPYPPGQHGQRRSK) are disordered. In terms of domain architecture, S4 RNA-binding spans 98 to 161 (RRLDNVVYRM…KNNPQIQRSL (64 aa)).

This sequence belongs to the universal ribosomal protein uS4 family. In terms of assembly, part of the 30S ribosomal subunit. Contacts protein S5. The interaction surface between S4 and S5 is involved in control of translational fidelity.

Its function is as follows. One of the primary rRNA binding proteins, it binds directly to 16S rRNA where it nucleates assembly of the body of the 30S subunit. With S5 and S12 plays an important role in translational accuracy. This is Small ribosomal subunit protein uS4 from Nitratiruptor sp. (strain SB155-2).